Here is a 61-residue protein sequence, read N- to C-terminus: Defensin BmKDfsin1 (61 aa).

The first 25 residues, 1–25 (MKTIVLLFVLVLVFALLVKMGMVEA), serve as a signal peptide directing secretion. 3 disulfides stabilise this stretch: Cys-29–Cys-50, Cys-36–Cys-58, and Cys-40–Cys-60.

The protein belongs to the invertebrate defensin family. Type 2 subfamily. As to expression, highly expressed in non-venom gland (hemolymph) and moderately expressed in venom gland.

It is found in the secreted. Functionally, antibacterial peptide active against Gram-positive bacteria, but not on Gram-negative bacteria. Also has weak blocking activity on Kv1.1/KCNA1, Kv1.2/KCNA2, Kv1.3/KCNA3, KCa3.1/KCNN4/IK, KCa2.3/KCNN3/SK3 and Kv11.1/KCNH2/ERG1 channels (tested at 1 uM). It inhibits potassium channel current by interacting with the pore region. This Olivierus martensii (Manchurian scorpion) protein is Defensin BmKDfsin1.